Here is a 44-residue protein sequence, read N- to C-terminus: Alpha-amylase inhibitor magnificamide (44 aa).

3 cysteine pairs are disulfide-bonded: C6-C38, C16-C33, and C20-C39. The inhibitory motif stretch occupies residues 7-10; it reads YIYH.

The protein belongs to the sea anemone alpha-amylase inhibitor family.

The protein resides in the secreted. In terms of biological role, mammalian alpha-amylase (AMY2A) inhibitor. The recombinant peptide inhibits porcine pancreatic (Ki=0.17 nM) and human saliva alpha-amylases (Ki=7.7 nM). It does not show antimicrobial (tested on fungi and bacteria) or channel modulating activities (tested on 18 voltage-gated sodium and potassium channles). The sequence is that of Alpha-amylase inhibitor magnificamide from Heteractis magnifica (Magnificent sea anemone).